A 564-amino-acid chain; its full sequence is Probable diguanylate cyclase DgcQ (564 aa).

Transmembrane regions (helical) follow at residues 20–40 (LGPG…STLL) and 360–380 (IALT…WYVI). The GGDEF domain occupies 428–563 (HPFSVIQVDL…GRNRVFASDN (136 aa)). Position 436 (D436) interacts with Mg(2+). Positions 444, 449, and 453 each coordinate substrate. E479 serves as a coordination point for Mg(2+). E479 acts as the Proton acceptor in catalysis.

As to quaternary structure, homodimer. It depends on Mg(2+) as a cofactor.

It is found in the cell inner membrane. The enzyme catalyses 2 GTP = 3',3'-c-di-GMP + 2 diphosphate. It functions in the pathway glycan metabolism; bacterial cellulose biosynthesis. It participates in purine metabolism; 3',5'-cyclic di-GMP biosynthesis. In terms of biological role, catalyzes the synthesis of cyclic-di-GMP (c-di-GMP) via the condensation of 2 GTP molecules. Cyclic-di-GMP is a second messenger which controls cell surface-associated traits in bacteria. Involved in the regulation of cellulose production. The sequence is that of Probable diguanylate cyclase DgcQ from Shigella dysenteriae serotype 1 (strain Sd197).